The sequence spans 270 residues: Phosphatidylglycerol--prolipoprotein diacylglyceryl transferase (270 aa).

Transmembrane regions (helical) follow at residues 19–39, 56–76, 92–112, and 116–136; these read FPVY…LWLA, LVLI…VIFE, QGGL…ILFA, and GVSF…GQAI. Position 138 (Arg-138) interacts with a 1,2-diacyl-sn-glycero-3-phospho-(1'-sn-glycerol). A run of 3 helical transmembrane segments spans residues 178–198, 206–226, and 236–256; these read HPTF…LLAL, GELF…VEGL, and LRIA…FIIV.

It belongs to the Lgt family.

Its subcellular location is the cell membrane. It carries out the reaction L-cysteinyl-[prolipoprotein] + a 1,2-diacyl-sn-glycero-3-phospho-(1'-sn-glycerol) = an S-1,2-diacyl-sn-glyceryl-L-cysteinyl-[prolipoprotein] + sn-glycerol 1-phosphate + H(+). Its pathway is protein modification; lipoprotein biosynthesis (diacylglyceryl transfer). Its function is as follows. Catalyzes the transfer of the diacylglyceryl group from phosphatidylglycerol to the sulfhydryl group of the N-terminal cysteine of a prolipoprotein, the first step in the formation of mature lipoproteins. In Bacillus cereus (strain Q1), this protein is Phosphatidylglycerol--prolipoprotein diacylglyceryl transferase.